The chain runs to 591 residues: V-type ATP synthase alpha chain (591 aa).

233-240 is a binding site for ATP; sequence GPFGAGKT.

The protein belongs to the ATPase alpha/beta chains family.

The enzyme catalyses ATP + H2O + 4 H(+)(in) = ADP + phosphate + 5 H(+)(out). Produces ATP from ADP in the presence of a proton gradient across the membrane. The V-type alpha chain is a catalytic subunit. The sequence is that of V-type ATP synthase alpha chain from Streptococcus pneumoniae (strain Hungary19A-6).